A 135-amino-acid polypeptide reads, in one-letter code: QECKCHGVSGSCTLKTCWVTLPHFREVGYALKDKYEQAVMVEAVRGRRHVVPTFLKLKIPQNNSKPAETDLVYVDRSPNFCEKDNATGSIGTYGRFCNRTSTQADSCELLCCGRGYKTFQYTRTGQCHCKFHWCC.

Disulfide bonds link Cys3–Cys17 and Cys5–Cys12. The O-palmitoleoyl serine; by PORCN moiety is linked to residue Ser9. 3 N-linked (GlcNAc...) asparagine glycosylation sites follow: Asn62, Asn85, and Asn98. Disulfide bonds link Cys81-Cys112, Cys97-Cys107, and Cys134-Cys135.

The protein belongs to the Wnt family. In terms of processing, palmitoleoylation is required for efficient binding to frizzled receptors. Depalmitoleoylation leads to Wnt signaling pathway inhibition.

The protein resides in the secreted. Its subcellular location is the extracellular space. It is found in the extracellular matrix. Its function is as follows. Ligand for members of the frizzled family of seven transmembrane receptors. Probable developmental protein. May be a signaling molecule which affects the development of discrete regions of tissues. Is likely to signal over only few cell diameters. The polypeptide is Protein Wnt-7c (wnt7c) (Xenopus laevis (African clawed frog)).